A 146-amino-acid polypeptide reads, in one-letter code: MSDERYAASDGGGTEVGSGTRGRTTVVTKPATRPQRPTGKRSRQRAANASNTGANVEVEESSTQAAIAKEGKVKKPKKSADRSANPIVFIYNYLKQVVGEMRKVIWPNRKQMLTYTSVVLAFLAFMVALVGLADFGLAKLVLLVFG.

The tract at residues 1–81 is disordered; sequence MSDERYAASD…KVKKPKKSAD (81 aa). The span at 10–20 shows a compositional bias: gly residues; sequence DGGGTEVGSGT. Over residues 45-54 the composition is skewed to polar residues; the sequence is RAANASNTGA. Residues 69-81 are compositionally biased toward basic and acidic residues; it reads KEGKVKKPKKSAD. Residues 118–138 form a helical membrane-spanning segment; sequence VVLAFLAFMVALVGLADFGLA.

Belongs to the SecE/SEC61-gamma family. In terms of assembly, component of the Sec protein translocase complex. Heterotrimer consisting of SecY, SecE and SecG subunits. The heterotrimers can form oligomers, although 1 heterotrimer is thought to be able to translocate proteins. Interacts with the ribosome. Interacts with SecDF, and other proteins may be involved. Interacts with SecA.

It localises to the cell membrane. Functionally, essential subunit of the Sec protein translocation channel SecYEG. Clamps together the 2 halves of SecY. May contact the channel plug during translocation. The polypeptide is Protein translocase subunit SecE (Mycobacterium leprae (strain TN)).